The following is a 737-amino-acid chain: MGESKCPVNFAGGGTRNKDWWPDQLRLNILRQHTSASNPLDADFDYAAAFNSLDYNALKKDLEALMTDSQDWWPADFGHYGGLFIRMAWHSAGTYRVFDGRGGAGQGQQRFAPLNSWPDNASLDKARRLLWPIKQKYGNKISWADLMILAGNVALESMGFKPFGFSGGRADTWEADESVYWGGEKTWFPKGNDVRYPNDDIYTRDLENPLAASHMGLIYVNPEGPNGNPDPKAAARDIRVTFGRMAMNDEETVALIAGGHSFGKTHGASSGDHCGPEPEAAGLEAQGLGWQSKYGSGSGRDAITSGLEVTWTKTPTRWSTNFLEYLFAFDWELTKSPAGANQWVAKNADAIIPDAFDPSKKHKPQMLTTDLALRYDPAYEKIARRFLENPDQFADAFARAWFKLTHRDMGPRARYVGPEVPSEVLIWQDPIPAVNHPLVDASDIASLKQAILNSGVDRSKFVSTAWAAASTFRGGDKRGGANGARIRLAPQRDWEVNNQPWLKESLAALEKIQSSFNGSRSDRKKISLADLIVLAGCAAVESAAQEAGHAVSVPFTPGRMDASQEETDVESFSHMEPVADGFRNYSTAPTRRRAEHYLVDKAQMLTLSAPEMTALVGGLRALNANYDGSAHGVFTSRPGYLTNDFFVNLLDMGTTWKPTDASGELYEGADRRTGSKKWTATRVDLVFGSHAELRAIAEVYGSSDGERKFVKDFVAAWNKVMNLDRFDLKRENVPARL.

The tryptophyl-tyrosyl-methioninium (Trp-Tyr) (with M-245) cross-link spans 89–219 (WHSAGTYRVF…LAASHMGLIY (131 aa)). Catalysis depends on histidine 90, which acts as the Proton acceptor. The segment at residues 219 to 245 (YVNPEGPNGNPDPKAAARDIRVTFGRM) is a cross-link (tryptophyl-tyrosyl-methioninium (Tyr-Met) (with W-89)). Histidine 260 lines the heme b pocket.

The protein belongs to the peroxidase family. Peroxidase/catalase subfamily. As to quaternary structure, homodimer or homotetramer. Requires heme b as cofactor. In terms of processing, formation of the three residue Trp-Tyr-Met cross-link is important for the catalase, but not the peroxidase activity of the enzyme.

It localises to the cytoplasm. The enzyme catalyses H2O2 + AH2 = A + 2 H2O. It carries out the reaction 2 H2O2 = O2 + 2 H2O. Bifunctional enzyme with both catalase and broad-spectrum peroxidase activity. This is Catalase-peroxidase from Aspergillus terreus (strain NIH 2624 / FGSC A1156).